Consider the following 1408-residue polypeptide: MKSLLDLFKQFTPDEHFDAIKIGMASPEKIRSWSFGEVKKPETINYRTFKPERDGLFCAKIFGPIKDYECLCGKYKRLKHRGVICEKCGVEVTQTKVRRERMGHIDLAAPCAHIWFLKSLPSRLGLVLDMTLRDIERVLYFEAYVVTDPGMTPLKKFSIMSEDDYDAKRKEYGDEYVAKMGAEGIKDLLEGLDLDVEIDKLRNDLTGSEIKIKKNAKRLKLMEAFKKSGIKPEWMVLDVLPVLPPDLRPLVPLDGGRFATSDLNDLYRRVINRNSRLRRLLELKAPEIIARNEKRMLQEAVDSLLDNGRRGKAMTGANKRALKSLADMIKGKSGRFRQNLLGKRVDYSGRSVITMGPTLKLHQCGLPKLMALELFKPFIFSRLEAMGIATTIKAAKKEVESGTPVVWDILEEVIKEHPVMLNRAPTLHRLGIQAFEPILIEGKAIQLHPLVCSAFNADFDGDQMAVHVPLSVEAQMEARTLMLASNNILFPANGEPSIVPSQDVVLGLYYTTRDRTNGKGEGLVFSDTGEVRRAFDAGELDLNARISVRLTEWTKNKETGEFIPSTKLWETTGGRALLSEILPKGLPFSNINKALKKKEISKLINVSFRKCGLKETVVFADKLLQSGFRLATKAGISICIDDMLVPKEKHDIISRAQKEVKEIEQQYVSGLVTSGERYNKVVDIWGKSGDEVSKVMMAQLSKEKVIDRHGKEVEQESFNSIYMMADSGARGSAAQIRQVAGMRGLMAKPDGSIIETPITANFREGLNVLEYFISTHGARKGLADTALKTANSGYLTRRLCDVVQDLVVTEDDCGTQEGSLMRAIVEGGEVIESLRERILGRTAVEDVLHPENRSVLAKAGAMLDEDLIDELEAAGVDEVKVRTALTCETRFGLCAKCYGRDLGRGGLINIGEAVGIIAAQSIGEPGTQLTMRTFHIGGAASRAAIASSVEAKSNGVIGFNAPMRYVTNGKGELVVIARSGEIVIHDEHGRERERHKVPYGATLTVKADQTIKAGAILANWDPLTRPIITEFAGKVLFENVEEGVTVAKQVDDVTGLSTLVVIDPKRRGATKVIRPQVKLIDATGNEVKIPGTDHSVTIGFQVGALVQVRDGQDVGPGEVLARIPVEGQKTRDITGGLPRVAELFEARTPKDKGTLAEMTGTVSFGKETKGKVRLQITDPDGKVWEDLVPKEKNILVHEGQVVNKGESIVDGPADPQDILRLLGMEELARYIVDEVQDVYRLQGVKINDKHIEVIVRQMLRRVVVENVGDSSYIAGEQVERSAMLDANDALRAEGKIPATFSNLLLGITKASLSTDSFISAASFQETTRVLTEAAIMGKRDELRGLKENVIVGRLIPAGTGMAYHEARKAKDLMDDAERRAIAEAEAAELEAATATAPADAGGDSPATE.

Zn(2+) is bound by residues C70, C72, C85, and C88. D458, D460, and D462 together coordinate Mg(2+). Zn(2+)-binding residues include C813, C887, C894, and C897. Positions A1387–E1408 are disordered. Residues L1389–E1408 are compositionally biased toward low complexity.

It belongs to the RNA polymerase beta' chain family. In terms of assembly, the RNAP catalytic core consists of 2 alpha, 1 beta, 1 beta' and 1 omega subunit. When a sigma factor is associated with the core the holoenzyme is formed, which can initiate transcription. The cofactor is Mg(2+). Zn(2+) is required as a cofactor.

The enzyme catalyses RNA(n) + a ribonucleoside 5'-triphosphate = RNA(n+1) + diphosphate. In terms of biological role, DNA-dependent RNA polymerase catalyzes the transcription of DNA into RNA using the four ribonucleoside triphosphates as substrates. In Polaromonas sp. (strain JS666 / ATCC BAA-500), this protein is DNA-directed RNA polymerase subunit beta'.